A 462-amino-acid chain; its full sequence is Bifunctional protein HldE (462 aa).

Positions 1–309 are ribokinase; that stretch reads MKPRILVLGD…EYERSIRKAP (309 aa). ATP is bound at residue 186–189; sequence NKKE. Aspartate 254 is a catalytic residue. The segment at 336-462 is cytidylyltransferase; that stretch reads FTNGCFDILH…TAIVERMRSC (127 aa).

This sequence in the N-terminal section; belongs to the carbohydrate kinase PfkB family. It in the C-terminal section; belongs to the cytidylyltransferase family. As to quaternary structure, homodimer.

It carries out the reaction D-glycero-beta-D-manno-heptose 7-phosphate + ATP = D-glycero-beta-D-manno-heptose 1,7-bisphosphate + ADP + H(+). It catalyses the reaction D-glycero-beta-D-manno-heptose 1-phosphate + ATP + H(+) = ADP-D-glycero-beta-D-manno-heptose + diphosphate. Its pathway is nucleotide-sugar biosynthesis; ADP-L-glycero-beta-D-manno-heptose biosynthesis; ADP-L-glycero-beta-D-manno-heptose from D-glycero-beta-D-manno-heptose 7-phosphate: step 1/4. It functions in the pathway nucleotide-sugar biosynthesis; ADP-L-glycero-beta-D-manno-heptose biosynthesis; ADP-L-glycero-beta-D-manno-heptose from D-glycero-beta-D-manno-heptose 7-phosphate: step 3/4. Functionally, catalyzes the phosphorylation of D-glycero-D-manno-heptose 7-phosphate at the C-1 position to selectively form D-glycero-beta-D-manno-heptose-1,7-bisphosphate. Its function is as follows. Catalyzes the ADP transfer from ATP to D-glycero-beta-D-manno-heptose 1-phosphate, yielding ADP-D-glycero-beta-D-manno-heptose. The sequence is that of Bifunctional protein HldE from Nitratiruptor sp. (strain SB155-2).